Reading from the N-terminus, the 522-residue chain is Ribose import ATP-binding protein RbsA 1 (522 aa).

ABC transporter domains follow at residues 8-243 (LRIE…GRSI) and 249-496 (RERP…VSTN). An ATP-binding site is contributed by 40–47 (GENGAGKS). Residues 492-522 (AVSTNQYKPDKSDKPDASAGKTDQKEAPRGH) form a disordered region. Basic and acidic residues predominate over residues 499-522 (KPDKSDKPDASAGKTDQKEAPRGH).

The protein belongs to the ABC transporter superfamily. Ribose importer (TC 3.A.1.2.1) family. As to quaternary structure, the complex is composed of an ATP-binding protein (RbsA), two transmembrane proteins (RbsC) and a solute-binding protein (RbsB).

The protein resides in the cell membrane. It catalyses the reaction D-ribose(out) + ATP + H2O = D-ribose(in) + ADP + phosphate + H(+). Its function is as follows. Part of the ABC transporter complex RbsABC involved in ribose import. Responsible for energy coupling to the transport system. The protein is Ribose import ATP-binding protein RbsA 1 of Streptomyces avermitilis (strain ATCC 31267 / DSM 46492 / JCM 5070 / NBRC 14893 / NCIMB 12804 / NRRL 8165 / MA-4680).